A 147-amino-acid polypeptide reads, in one-letter code: MSKALIKFIRLSPTKARLIAREVQGMNAELAMASLKFMPNKGAKYIANAISSAVANGGFEANEVIVKSCRVDAAAVLKRFRPRARGSASRIRKPTSHILVEVAKAEVKAEEKKTVAKKAPAAKKTTTTKAPAKKTTSTKKATAKKES.

A disordered region spans residues 110–147; sequence EEKKTVAKKAPAAKKTTTTKAPAKKTTSTKKATAKKES. Low complexity predominate over residues 117-140; sequence KKAPAAKKTTTTKAPAKKTTSTKK.

The protein belongs to the universal ribosomal protein uL22 family. In terms of assembly, part of the 50S ribosomal subunit.

Its function is as follows. This protein binds specifically to 23S rRNA; its binding is stimulated by other ribosomal proteins, e.g. L4, L17, and L20. It is important during the early stages of 50S assembly. It makes multiple contacts with different domains of the 23S rRNA in the assembled 50S subunit and ribosome. In terms of biological role, the globular domain of the protein is located near the polypeptide exit tunnel on the outside of the subunit, while an extended beta-hairpin is found that lines the wall of the exit tunnel in the center of the 70S ribosome. This Campylobacter jejuni subsp. jejuni serotype O:6 (strain 81116 / NCTC 11828) protein is Large ribosomal subunit protein uL22.